The primary structure comprises 326 residues: Vitamin B12 import system permease protein BtuC (326 aa).

9 helical membrane passes run 15–35, 61–81, 88–108, 112–132, 146–166, 184–204, 240–260, 274–294, and 302–322; these read WLLCLSVLMLLALLLSLCAGE, LAVLLVGAALAISGAVMQALF, PGLLGVSNGAGVGLIAAVLLG, LPNWALGLCAIAGALIITLIL, LLAGVALGIICSALMTWAIYF, GGVDWRQSWLMLALIPVLLWI, GWMVGVSVALAGAIGFIGLVI, VLLPGCALAGASALLLADIVA, and ELPIGVVTATLGAPVFIWLLL.

Belongs to the binding-protein-dependent transport system permease family. FecCD subfamily. The complex is composed of two ATP-binding proteins (BtuD), two transmembrane proteins (BtuC) and a solute-binding protein (BtuF).

The protein localises to the cell inner membrane. Functionally, part of the ABC transporter complex BtuCDF involved in vitamin B12 import. Involved in the translocation of the substrate across the membrane. The sequence is that of Vitamin B12 import system permease protein BtuC from Escherichia coli O7:K1 (strain IAI39 / ExPEC).